We begin with the raw amino-acid sequence, 315 residues long: High mobility group protein hmg-12 (315 aa).

Residues 57–315 form a disordered region; sequence VKNETDSEAV…AIDAFFDGSD (259 aa). Polar residues predominate over residues 77–86; that stretch reads ANDSPANTND. The segment at residues 118-128 is a DNA-binding region (a.T hook 1); that stretch reads PVKKGRGRPIK. Low complexity-rich tracts occupy residues 147-160 and 196-205; these read AQTP…IDTA and AADTDAIDTA.

Belongs to the HMGA family.

Its subcellular location is the nucleus. Its function is as follows. Transcriptional regulator. Binds to specific sequence motifs in regulatory elements. May recruit transcription factors, or may induce structural changes in chromatin, to thereby modulate embryonic expression of ATP-dependent chaperone cdc-48.1. In Caenorhabditis elegans, this protein is High mobility group protein hmg-12.